We begin with the raw amino-acid sequence, 244 residues long: Probable transcriptional regulatory protein TT_C0469 (244 aa).

It belongs to the TACO1 family.

The protein localises to the cytoplasm. In Thermus thermophilus (strain ATCC BAA-163 / DSM 7039 / HB27), this protein is Probable transcriptional regulatory protein TT_C0469.